Consider the following 1058-residue polypeptide: Kinesin-like protein KIN-7M, chloroplastic (1058 aa).

The N-terminal 60 residues, 1-60, are a transit peptide targeting the chloroplast; the sequence is MASSSSRTRSRSPFSHRRPPSPYSSASSTSSSLINNRLLPRSSSTPTSTVYNSGGVTGSR. Positions 1–92 are disordered; the sequence is MASSSSRTRS…QSYPSEGLIG (92 aa). Residues 8–19 are compositionally biased toward basic residues; sequence TRSRSPFSHRRP. The segment covering 23-49 has biased composition (low complexity); that stretch reads YSSASSTSSSLINNRLLPRSSSTPTST. Residues 50–70 show a composition bias toward polar residues; sequence VYNSGGVTGSRSMSITRTISD. In terms of domain architecture, Kinesin motor spans 104-421; the sequence is SISVTVRFRP…LKFASRAKRI (318 aa). 184–191 is an ATP binding site; sequence GVTSSGKT. A coiled-coil region spans residues 422-509; that stretch reads EINASRNKII…QKLTKLILVS (88 aa). Positions 549 to 578 are disordered; sequence PSSTLSLASDARRSSSKFKDENSPVGSRAE. Residues 558–570 show a composition bias toward basic and acidic residues; that stretch reads DARRSSSKFKDEN. Coiled-coil stretches lie at residues 621 to 658, 704 to 826, 873 to 904, and 935 to 999; these read PENSKTQIQNLENDIQEKQRQMKSLEQRITESGEASIA, NNEL…AQKR, LEAALAEKEYIEEEFRKKAEEAKRREEALEND, and KEDE…SQAA. Over residues 824 to 838 the composition is skewed to low complexity; the sequence is QKRNNNSMNSAANRN. Residues 824-847 form a disordered region; it reads QKRNNNSMNSAANRNGTRPGRKAR. Positions 922-946 are disordered; it reads ALSIQKSDEAEPAKEDEVTELDNKN. The segment covering 927–946 has biased composition (basic and acidic residues); that stretch reads KSDEAEPAKEDEVTELDNKN. The segment at 1011 to 1046 adopts an RING-type zinc-finger fold; sequence CKVCFESPTATILLPCRHFCLCKSCSLACSECPICR.

This sequence belongs to the TRAFAC class myosin-kinesin ATPase superfamily. Kinesin family. KIN-7 subfamily.

It localises to the plastid. The protein resides in the chloroplast. The chain is Kinesin-like protein KIN-7M, chloroplastic from Arabidopsis thaliana (Mouse-ear cress).